A 234-amino-acid chain; its full sequence is ATP-dependent dethiobiotin synthetase BioD (234 aa).

12 to 17 (DVGKTI) serves as a coordination point for ATP. Mg(2+) is bound at residue Thr16. Residue Lys37 is part of the active site. Substrate is bound at residue Thr41. ATP-binding positions include Asp54 and 115–118 (EGAG). Residues Asp54 and Glu115 each coordinate Mg(2+).

The protein belongs to the dethiobiotin synthetase family. In terms of assembly, homodimer. Requires Mg(2+) as cofactor.

It is found in the cytoplasm. It carries out the reaction (7R,8S)-7,8-diammoniononanoate + CO2 + ATP = (4R,5S)-dethiobiotin + ADP + phosphate + 3 H(+). Its pathway is cofactor biosynthesis; biotin biosynthesis; biotin from 7,8-diaminononanoate: step 1/2. Functionally, catalyzes a mechanistically unusual reaction, the ATP-dependent insertion of CO2 between the N7 and N8 nitrogen atoms of 7,8-diaminopelargonic acid (DAPA, also called 7,8-diammoniononanoate) to form a ureido ring. This Lysinibacillus sphaericus (strain C3-41) protein is ATP-dependent dethiobiotin synthetase BioD.